The primary structure comprises 278 residues: NAD-dependent protein deacylase (278 aa).

The 249-residue stretch at 22–270 folds into the Deacetylase sirtuin-type domain; the sequence is RSRIFHRDSA…PEYIREFLTT (249 aa). 46 to 65 is a binding site for NAD(+); it reads GAGISAESGIRTFRADDGLW. Residues tyrosine 90 and arginine 93 each coordinate substrate. 127–130 contributes to the NAD(+) binding site; it reads QNID. The active-site Proton acceptor is the histidine 145. 2 residues coordinate Zn(2+): cysteine 153 and cysteine 172. Residues 212–214, 238–240, and alanine 256 each bind NAD(+); these read GTS and NLE.

This sequence belongs to the sirtuin family. Class III subfamily. Zn(2+) serves as cofactor.

The protein localises to the cytoplasm. It carries out the reaction N(6)-acetyl-L-lysyl-[protein] + NAD(+) + H2O = 2''-O-acetyl-ADP-D-ribose + nicotinamide + L-lysyl-[protein]. The catalysed reaction is N(6)-succinyl-L-lysyl-[protein] + NAD(+) + H2O = 2''-O-succinyl-ADP-D-ribose + nicotinamide + L-lysyl-[protein]. It catalyses the reaction N(6)-(2-hydroxyisobutanoyl)-L-lysyl-[protein] + NAD(+) + H2O = 2''-O-(2-hydroxyisobutanoyl)-ADP-D-ribose + nicotinamide + L-lysyl-[protein]. In terms of biological role, NAD-dependent lysine deacetylase that specifically removes acetyl groups on target proteins. Also acts as a protein-lysine deacylase by mediating protein desuccinylation and de-2-hydroxyisobutyrylation. Modulates the activities of several proteins which are inactive in their acylated form. In Yersinia pestis, this protein is NAD-dependent protein deacylase.